The chain runs to 245 residues: 1-(5-phosphoribosyl)-5-[(5-phosphoribosylamino)methylideneamino] imidazole-4-carboxamide isomerase (245 aa).

Asp11 (proton acceptor) is an active-site residue. The active-site Proton donor is Asp132.

Belongs to the HisA/HisF family.

It is found in the cytoplasm. The enzyme catalyses 1-(5-phospho-beta-D-ribosyl)-5-[(5-phospho-beta-D-ribosylamino)methylideneamino]imidazole-4-carboxamide = 5-[(5-phospho-1-deoxy-D-ribulos-1-ylimino)methylamino]-1-(5-phospho-beta-D-ribosyl)imidazole-4-carboxamide. Its pathway is amino-acid biosynthesis; L-histidine biosynthesis; L-histidine from 5-phospho-alpha-D-ribose 1-diphosphate: step 4/9. In Bacillus pumilus (strain SAFR-032), this protein is 1-(5-phosphoribosyl)-5-[(5-phosphoribosylamino)methylideneamino] imidazole-4-carboxamide isomerase.